The primary structure comprises 147 residues: uncharacterized protein (147 aa).

In terms of domain architecture, HTH marR-type spans 1–137 (MRDNTIGSLI…LYELMTKVHK (137 aa)). Positions 53–76 (QMELAEKVTVTQGGISRMLTRLEK) form a DNA-binding region, H-T-H motif.

This is an uncharacterized protein from Bacillus thuringiensis subsp. konkukian (strain 97-27).